The following is a 116-amino-acid chain: Guanylin (116 aa).

Positions methionine 1 to threonine 23 are cleaved as a signal peptide. The propeptide occupies valine 24–aspartate 101. Disulfide bonds link cysteine 69-cysteine 83, cysteine 105-cysteine 113, and cysteine 108-cysteine 116.

Belongs to the guanylin family. Localized in both crypts and villi in the small intestine and to superficial epithelial cells in the colon.

The protein resides in the secreted. In terms of biological role, endogenous activator of intestinal guanylate cyclase. It stimulates this enzyme through the same receptor binding region as the heat-stable enterotoxins. In Mus musculus (Mouse), this protein is Guanylin (Guca2a).